We begin with the raw amino-acid sequence, 350 residues long: MNKSTLAIVVSIIASASVHAAEVYNKNGNKLDVYGKVKAMHYMSDYDSKDGDQSYVRFGFKGETQINDQLTGYGRWEAEFASNKAESDSSQQKTRLAFAGLKLKDIGSFDYGRNLGALYDVEAWTDMFPEFGGDSSAQTDNFMTKRASGLATYRNTDFFGIVDGLDLTLQYQGKNEDRDVKKQNGDGFGTSVSYDFGGSDFAVSGAYTLSDRTREQNLQRRGTGDKAEAWATGVKYDANDIYIATFYSETRNMTPVSGGFANKTQNFEAVIQYQFDFGLRPSLGYVLSKGKDIEGVGSEDLVNYIDVGATYYFNKNMSAFVDYKINQLDSDNTLGINDDDIVAIGLTYQF.

Positions 1 to 20 are cleaved as a signal peptide; it reads MNKSTLAIVVSIIASASVHA.

Belongs to the Gram-negative porin family. In terms of assembly, homotrimer.

Its subcellular location is the cell outer membrane. Uptake of inorganic phosphate, phosphorylated compounds, and some other negatively charged solutes. This chain is Outer membrane porin PhoE (phoE), found in Salmonella typhimurium (strain LT2 / SGSC1412 / ATCC 700720).